A 132-amino-acid polypeptide reads, in one-letter code: Small ribosomal subunit protein uS9 (132 aa).

The protein belongs to the universal ribosomal protein uS9 family.

In Mesomycoplasma hyopneumoniae (strain 232) (Mycoplasma hyopneumoniae), this protein is Small ribosomal subunit protein uS9.